The primary structure comprises 532 residues: FAD-dependent monooxygenase hkm7 (532 aa).

FAD-binding positions include 191-193 and Asp-261; that span reads RIY.

It belongs to the PheA/TfdB FAD monooxygenase family.

The protein operates within secondary metabolite biosynthesis. Its function is as follows. FAD-dependent monooxygenase; part of the gene cluster that mediates the biosynthesis of hancockiamides, an unusual new family of N-cinnamoylated piperazines. The NRPS hkm10 and the NmrA-like reductase hkm9 are proposed to convert two molecules of L-Phe to the intermediary piperazine called xenocockiamide A. Xenocockiamide A is then converted to hancockiamide D via a series of hydroxylations and O-methylations. The tyrosinase hkm6 may catalyze an aromatic hydroxylation, then the 2-oxoglutarate-dependent Fe(II) dioxygenase hkm4 and the FAD-dependent phenol hydroxylase hkm7 may catalyze consecutive hydroxylations to install 2 more hydroxy groups, and the methyltransferase hkm8 probably catalyzes two methylations using 2 molecules of S-adenosyl-L-methionine (SAM). The NRPS hkm11 activates and transfers trans-cinnamate supplied by the PAL hkm12 to hancockiamide D and produces hancockiamide A. NRPS Hkm11 has the flexibility to tolerate the bulky hancockiamide G as a substrate and the absence of the acetyl-transferase hkm3 opens up the opportunity for hkm11 to introduce a second N-cinnamoyl moiety. The cytochrome P450 monooxygenase hkm5 catalyzes the methylenedioxy bridge formation, converting hancockiamide A into hancockiamide G. Hkm5 can also convert hancockiamide B into hancockiamide C, and hancockiamide D into hancockiamide H. The N-acetyltransferase hkm3 finally transfers an acetyl group to 1-N of piperazine, converting hancockiamide A into hancockiamide B and hancockiamide G into hancockiamide C. This chain is FAD-dependent monooxygenase hkm7, found in Aspergillus hancockii.